The chain runs to 93 residues: MLLKLQIQLFASKKGAGSTRNGRDSHSKRLGAKLSDGQIAKAGSIIYRQRGTKIYPGFNVGLGGDDTLFAKISGIIKYESKRGNRKKVSVYPQ.

The propeptide occupies 1–10 (MLLKLQIQLF).

It belongs to the bacterial ribosomal protein bL27 family. Post-translationally, the N-terminus is cleaved by ribosomal processing cysteine protease Prp.

This is Large ribosomal subunit protein bL27 from Phytoplasma australiense.